The following is a 75-amino-acid chain: Calhepatin (75 aa).

S1 bears the N-acetylserine mark. EF-hand domains are found at residues 2–37 and 38–73; these read ADEQ…VHPK and VSRN…LADL. 10 residues coordinate Ca(2+): D15, D17, S19, T21, E26, D51, N53, D55, Q57, and E62.

As to quaternary structure, monomer and homodimer. In terms of tissue distribution, liver, and to a much lower level intestine.

Binds both calcium and copper, but not zinc. May be involved in calcium signal transduction. This Lepidosiren paradoxus (South American lungfish) protein is Calhepatin.